Reading from the N-terminus, the 835-residue chain is Protein P (835 aa).

Residues 1–176 (MPLSYQHFRK…FFGTPYTWEH (176 aa)) form a terminal protein domain (TP) region. The spacer stretch occupies residues 177 to 334 (KLQHGTQPVN…HCLHHIVKLL (158 aa)). 2 disordered regions span residues 211–235 (LGQK…WSRT) and 258–288 (RHPS…PTSH). Positions 335 to 680 (DDWGPCQHHG…YMHLYPVARQ (346 aa)) are polymerase/reverse transcriptase domain (RT). Residues 345 to 590 (HHFIRIPRTP…KALNFMGYVI (246 aa)) enclose the Reverse transcriptase domain. Positions 417, 541, and 542 each coordinate Mg(2+).

The protein belongs to the hepadnaviridae P protein family.

The catalysed reaction is DNA(n) + a 2'-deoxyribonucleoside 5'-triphosphate = DNA(n+1) + diphosphate. It carries out the reaction Endonucleolytic cleavage to 5'-phosphomonoester.. With respect to regulation, activated by host HSP70 and HSP40 in vitro to be able to bind the epsilon loop of the pgRNA. Because deletion of the RNase H region renders the protein partly chaperone-independent, the chaperones may be needed indirectly to relieve occlusion of the RNA-binding site by this domain. Inhibited by several reverse-transcriptase inhibitors: Lamivudine, Adefovir and Entecavir. Its function is as follows. Multifunctional enzyme that converts the viral RNA genome into dsDNA in viral cytoplasmic capsids. This enzyme displays a DNA polymerase activity that can copy either DNA or RNA templates, and a ribonuclease H (RNase H) activity that cleaves the RNA strand of RNA-DNA heteroduplexes in a partially processive 3'- to 5'-endonucleasic mode. Neo-synthesized pregenomic RNA (pgRNA) are encapsidated together with the P protein, and reverse-transcribed inside the nucleocapsid. Initiation of reverse-transcription occurs first by binding the epsilon loop on the pgRNA genome, and is initiated by protein priming, thereby the 5'-end of (-)DNA is covalently linked to P protein. Partial (+)DNA is synthesized from the (-)DNA template and generates the relaxed circular DNA (RC-DNA) genome. After budding and infection, the RC-DNA migrates in the nucleus, and is converted into a plasmid-like covalently closed circular DNA (cccDNA). The activity of P protein does not seem to be necessary for cccDNA generation, and is presumably released from (+)DNA by host nuclear DNA repair machinery. The sequence is that of Protein P from Woolly monkey hepatitis B virus (isolate Louisville) (WMHBV).